The chain runs to 343 residues: Glutamine synthetase (343 aa).

Residues 3–87 (FKAEYIWIDG…CEVLNIDLTP (85 aa)) enclose the GS beta-grasp domain. Residues 92–343 (TRAALAEVAE…CSALEKAGQV (252 aa)) form the GS catalytic domain. Mg(2+)-binding residues include glutamate 113, glutamate 115, glutamate 174, and glutamate 181. Glutamate 279 is a binding site for L-glutamate.

Belongs to the glutamine synthetase family. Homooctamer and homotetramer. The cofactor is Mg(2+).

It is found in the cytoplasm. The catalysed reaction is L-glutamate + NH4(+) + ATP = L-glutamine + ADP + phosphate + H(+). Functionally, catalyzes the ATP-dependent biosynthesis of glutamine from glutamate and ammonia. The chain is Glutamine synthetase from Streptomyces viridochromogenes.